The chain runs to 419 residues: Chalcone synthase D (419 aa).

Residue C164 is part of the active site.

Belongs to the thiolase-like superfamily. Chalcone/stilbene synthases family.

It carries out the reaction (E)-4-coumaroyl-CoA + 3 malonyl-CoA + 3 H(+) = 2',4,4',6'-tetrahydroxychalcone + 3 CO2 + 4 CoA. The protein operates within secondary metabolite biosynthesis; flavonoid biosynthesis. In terms of biological role, the primary product of this enzyme is 4,2',4',6'-tetrahydroxychalcone (also termed naringenin-chalcone or chalcone) which can under specific conditions spontaneously isomerize into naringenin. This Petunia hybrida (Petunia) protein is Chalcone synthase D (CHSD).